The following is a 315-amino-acid chain: Ribosomal RNA small subunit methyltransferase H (315 aa).

S-adenosyl-L-methionine is bound by residues 36 to 38 (GGH), Asp56, Phe80, Asp102, and Gln109.

It belongs to the methyltransferase superfamily. RsmH family.

It is found in the cytoplasm. The enzyme catalyses cytidine(1402) in 16S rRNA + S-adenosyl-L-methionine = N(4)-methylcytidine(1402) in 16S rRNA + S-adenosyl-L-homocysteine + H(+). Specifically methylates the N4 position of cytidine in position 1402 (C1402) of 16S rRNA. The chain is Ribosomal RNA small subunit methyltransferase H from Proteus mirabilis (strain HI4320).